A 315-amino-acid polypeptide reads, in one-letter code: Methionyl-tRNA formyltransferase (315 aa).

A (6S)-5,6,7,8-tetrahydrofolate-binding site is contributed by 109–112; sequence SLLP.

This sequence belongs to the Fmt family.

It carries out the reaction L-methionyl-tRNA(fMet) + (6R)-10-formyltetrahydrofolate = N-formyl-L-methionyl-tRNA(fMet) + (6S)-5,6,7,8-tetrahydrofolate + H(+). Attaches a formyl group to the free amino group of methionyl-tRNA(fMet). The formyl group appears to play a dual role in the initiator identity of N-formylmethionyl-tRNA by promoting its recognition by IF2 and preventing the misappropriation of this tRNA by the elongation apparatus. The protein is Methionyl-tRNA formyltransferase of Lachnospira eligens (strain ATCC 27750 / DSM 3376 / VPI C15-48 / C15-B4) (Eubacterium eligens).